We begin with the raw amino-acid sequence, 290 residues long: uncharacterized protein (290 aa).

An ABC transporter domain is found at 2–238 (LKTENLSVGY…EIVNELYDLK (237 aa)). Position 34 to 41 (34 to 41 (GPNGAGKS)) interacts with ATP.

The protein belongs to the ABC transporter superfamily.

This is an uncharacterized protein from Methanocaldococcus jannaschii (strain ATCC 43067 / DSM 2661 / JAL-1 / JCM 10045 / NBRC 100440) (Methanococcus jannaschii).